A 407-amino-acid chain; its full sequence is 1-deoxy-D-xylulose 5-phosphate reductoisomerase (407 aa).

NADPH-binding residues include Thr25, Gly26, Ser27, Ile28, Asn53, and Asn136. Lys137 provides a ligand contact to 1-deoxy-D-xylulose 5-phosphate. Position 138 (Glu138) interacts with NADPH. Asp162 serves as a coordination point for Mn(2+). 1-deoxy-D-xylulose 5-phosphate-binding residues include Ser163, Glu164, Ser188, and His211. Glu164 is a Mn(2+) binding site. Residue Gly217 participates in NADPH binding. 1-deoxy-D-xylulose 5-phosphate contacts are provided by Ser224, Asn229, Lys230, and Glu233. Glu233 is a binding site for Mn(2+).

This sequence belongs to the DXR family. Requires Mg(2+) as cofactor. Mn(2+) serves as cofactor.

The catalysed reaction is 2-C-methyl-D-erythritol 4-phosphate + NADP(+) = 1-deoxy-D-xylulose 5-phosphate + NADPH + H(+). It participates in isoprenoid biosynthesis; isopentenyl diphosphate biosynthesis via DXP pathway; isopentenyl diphosphate from 1-deoxy-D-xylulose 5-phosphate: step 1/6. In terms of biological role, catalyzes the NADPH-dependent rearrangement and reduction of 1-deoxy-D-xylulose-5-phosphate (DXP) to 2-C-methyl-D-erythritol 4-phosphate (MEP). The polypeptide is 1-deoxy-D-xylulose 5-phosphate reductoisomerase (Rhodopseudomonas palustris (strain HaA2)).